A 147-amino-acid polypeptide reads, in one-letter code: Large ribosomal subunit protein uL15 (147 aa).

The segment at 1–55 (MKLDNLAPQPGAKKRKRRVGRGIAAGQGASCGFGMRGQKSRSGRPTRPGFEGGQM) is disordered. The span at 23 to 35 (IAAGQGASCGFGM) shows a compositional bias: gly residues.

The protein belongs to the universal ribosomal protein uL15 family. In terms of assembly, part of the 50S ribosomal subunit.

Its function is as follows. Binds to the 23S rRNA. The polypeptide is Large ribosomal subunit protein uL15 (Synechococcus elongatus (strain ATCC 33912 / PCC 7942 / FACHB-805) (Anacystis nidulans R2)).